The following is an 81-amino-acid chain: Photosystem I iron-sulfur center (81 aa).

2 4Fe-4S ferredoxin-type domains span residues 2–31 (SHTV…MAPW) and 39–68 (VASA…VRVY). [4Fe-4S] cluster is bound by residues Cys-11, Cys-14, Cys-17, Cys-21, Cys-48, Cys-51, Cys-54, and Cys-58.

As to quaternary structure, the eukaryotic PSI reaction center is composed of at least 11 subunits. [4Fe-4S] cluster serves as cofactor.

It is found in the plastid. It localises to the chloroplast thylakoid membrane. The catalysed reaction is reduced [plastocyanin] + hnu + oxidized [2Fe-2S]-[ferredoxin] = oxidized [plastocyanin] + reduced [2Fe-2S]-[ferredoxin]. Functionally, apoprotein for the two 4Fe-4S centers FA and FB of photosystem I (PSI); essential for photochemical activity. FB is the terminal electron acceptor of PSI, donating electrons to ferredoxin. The C-terminus interacts with PsaA/B/D and helps assemble the protein into the PSI complex. Required for binding of PsaD and PsaE to PSI. PSI is a plastocyanin/cytochrome c6-ferredoxin oxidoreductase, converting photonic excitation into a charge separation, which transfers an electron from the donor P700 chlorophyll pair to the spectroscopically characterized acceptors A0, A1, FX, FA and FB in turn. This chain is Photosystem I iron-sulfur center, found in Tupiella akineta (Green alga).